Here is a 138-residue protein sequence, read N- to C-terminus: Endoribonuclease YbeY (138 aa).

The Zn(2+) site is built by H106, H110, and D116.

Belongs to the endoribonuclease YbeY family. Zn(2+) serves as cofactor.

It localises to the cytoplasm. In terms of biological role, single strand-specific metallo-endoribonuclease involved in late-stage 70S ribosome quality control and in maturation of the 3' terminus of the 16S rRNA. The polypeptide is Endoribonuclease YbeY (Phocaeicola vulgatus (strain ATCC 8482 / DSM 1447 / JCM 5826 / CCUG 4940 / NBRC 14291 / NCTC 11154) (Bacteroides vulgatus)).